A 251-amino-acid chain; its full sequence is MLQTMKTLTLIPARLGSTRLPNKPLADICGKPMIVHVADRAAAAKLGRTVIATDSEEIFKVVAAHGHEAIMTRGDHESGSDRIYEALAKLDPSGEVDAVVNVQGDLPTIDPDTIRRALLPLEDGPADIATLGVEITVEEEKTNPNVVKIVGSPLAGNRRLRALYFTRATAPYGEGPLYHHIGLYAYRRSALERFVKLGPSPLEKREKLEQLRALEAGMRIDVEIVKTVPLGVDTQADLDRARTFCSQAGTI.

The protein belongs to the KdsB family.

It is found in the cytoplasm. The enzyme catalyses 3-deoxy-alpha-D-manno-oct-2-ulosonate + CTP = CMP-3-deoxy-beta-D-manno-octulosonate + diphosphate. It functions in the pathway nucleotide-sugar biosynthesis; CMP-3-deoxy-D-manno-octulosonate biosynthesis; CMP-3-deoxy-D-manno-octulosonate from 3-deoxy-D-manno-octulosonate and CTP: step 1/1. Its pathway is bacterial outer membrane biogenesis; lipopolysaccharide biosynthesis. Functionally, activates KDO (a required 8-carbon sugar) for incorporation into bacterial lipopolysaccharide in Gram-negative bacteria. This chain is 3-deoxy-manno-octulosonate cytidylyltransferase, found in Brucella ovis (strain ATCC 25840 / 63/290 / NCTC 10512).